The primary structure comprises 37 residues: Large ribosomal subunit protein bL36 (37 aa).

It belongs to the bacterial ribosomal protein bL36 family.

This Staphylococcus epidermidis (strain ATCC 35984 / DSM 28319 / BCRC 17069 / CCUG 31568 / BM 3577 / RP62A) protein is Large ribosomal subunit protein bL36.